The sequence spans 560 residues: DNA ligase B (560 aa).

Lys-124 functions as the N6-AMP-lysine intermediate in the catalytic mechanism.

Belongs to the NAD-dependent DNA ligase family. LigB subfamily.

The catalysed reaction is NAD(+) + (deoxyribonucleotide)n-3'-hydroxyl + 5'-phospho-(deoxyribonucleotide)m = (deoxyribonucleotide)n+m + AMP + beta-nicotinamide D-nucleotide.. Functionally, catalyzes the formation of phosphodiester linkages between 5'-phosphoryl and 3'-hydroxyl groups in double-stranded DNA using NAD as a coenzyme and as the energy source for the reaction. The chain is DNA ligase B from Escherichia coli O7:K1 (strain IAI39 / ExPEC).